Reading from the N-terminus, the 242-residue chain is 3-deoxy-manno-octulosonate cytidylyltransferase (242 aa).

Belongs to the KdsB family.

It is found in the cytoplasm. The catalysed reaction is 3-deoxy-alpha-D-manno-oct-2-ulosonate + CTP = CMP-3-deoxy-beta-D-manno-octulosonate + diphosphate. The protein operates within nucleotide-sugar biosynthesis; CMP-3-deoxy-D-manno-octulosonate biosynthesis; CMP-3-deoxy-D-manno-octulosonate from 3-deoxy-D-manno-octulosonate and CTP: step 1/1. It functions in the pathway bacterial outer membrane biogenesis; lipopolysaccharide biosynthesis. Functionally, activates KDO (a required 8-carbon sugar) for incorporation into bacterial lipopolysaccharide in Gram-negative bacteria. The sequence is that of 3-deoxy-manno-octulosonate cytidylyltransferase from Mesorhizobium japonicum (strain LMG 29417 / CECT 9101 / MAFF 303099) (Mesorhizobium loti (strain MAFF 303099)).